Consider the following 293-residue polypeptide: 4-diphosphocytidyl-2-C-methyl-D-erythritol kinase (293 aa).

The active site involves K16. P99–S109 is an ATP binding site. The active site involves D141.

The protein belongs to the GHMP kinase family. IspE subfamily.

It carries out the reaction 4-CDP-2-C-methyl-D-erythritol + ATP = 4-CDP-2-C-methyl-D-erythritol 2-phosphate + ADP + H(+). It participates in isoprenoid biosynthesis; isopentenyl diphosphate biosynthesis via DXP pathway; isopentenyl diphosphate from 1-deoxy-D-xylulose 5-phosphate: step 3/6. Its function is as follows. Catalyzes the phosphorylation of the position 2 hydroxy group of 4-diphosphocytidyl-2C-methyl-D-erythritol. The sequence is that of 4-diphosphocytidyl-2-C-methyl-D-erythritol kinase from Burkholderia orbicola (strain MC0-3).